A 183-amino-acid polypeptide reads, in one-letter code: Ribosome rescue factor SmrB (183 aa).

Residues 98-173 form the Smr domain; sequence LDLHGLTQKQ…GDAALLVLIE (76 aa).

This sequence belongs to the SmrB family. Associates with collided ribosomes, but not with correctly translating polysomes.

Acts as a ribosome collision sensor. Detects stalled/collided disomes (pairs of ribosomes where the leading ribosome is stalled and a second ribosome has collided with it) and endonucleolytically cleaves mRNA at the 5' boundary of the stalled ribosome. Stalled/collided disomes form a new interface (primarily via the 30S subunits) that binds SmrB. Cleaved mRNA becomes available for tmRNA ligation, leading to ribosomal subunit dissociation and rescue of stalled ribosomes. In Erwinia tasmaniensis (strain DSM 17950 / CFBP 7177 / CIP 109463 / NCPPB 4357 / Et1/99), this protein is Ribosome rescue factor SmrB.